Consider the following 574-residue polypeptide: ATP-grasp enzyme fsqD (574 aa).

One can recognise an ATP-grasp domain in the interval 234–462; the sequence is NKFLTSKYVG…YWGLAAVLGV (229 aa). An ATP-binding site is contributed by 263 to 318; sequence ALPYPLIVKPCDGWSSEGVSRVESPDAFPAAVKSIDTSRHGTEFVMEPYCDGPEVD. 3 residues coordinate Mg(2+): Glu-394, Glu-431, and Asn-433. Residues Glu-394, Glu-431, and Asn-433 each coordinate Mn(2+).

Mg(2+) is required as a cofactor. It depends on Mn(2+) as a cofactor.

The protein operates within secondary metabolite biosynthesis. ATP-grasp enzyme; part of the gene cluster that mediates the biosynthesis of the isoquinoline alkaloids fumisoquin A, fumisoquin B and fumisoquin C; as well as small amounts of fumipyrrole as a shunt metabolite. The products of the cluster lead to a brown coloration and are important for growth and conidiation. The nonribosomal peptide synthetase-like protein fsqF, which lacks a canonical condensation domain, is required for addition of a serine-derived dehydroalanine moiety to activated tyrosine but is not essential for the subsequent steps leading to isoquinoline formation. A different enzyme, most likely the ATP-grasp enzyme fsqD, is responsible for activation of tyrosine. Three additional enzymes encoded by the fsq cluster, the N-methyltransferase fsqC, the phenol 2-monooxygenase fsqG and the FAD-dependent oxidase fsqB, catalyze the formation of the isoquinoline ring system in the fumisoquins. FsqB converts the fspF thiolation domain-bound (2S,4S,5S)-2-amino-6-(3,4-dihydroxyphenyl)-4-hydroxy-5-(methylamino)hexanoyl into isoquinoline. The cyclization most likely proceeds via a two-step mechanism, beginning with FAD-dependent oxidation of the methyl group to an iminium species followed by electrophilic attack on the deprotonated phenol. In Aspergillus fumigatus (strain ATCC MYA-4609 / CBS 101355 / FGSC A1100 / Af293) (Neosartorya fumigata), this protein is ATP-grasp enzyme fsqD.